Here is a 199-residue protein sequence, read N- to C-terminus: Guanylate kinase (199 aa).

The Guanylate kinase-like domain occupies 20–198 (GKLIILTGPS…ALQAIEVALF (179 aa)). ATP is bound at residue 27–34 (GPSGVGKG).

It belongs to the guanylate kinase family.

The protein localises to the cytoplasm. It catalyses the reaction GMP + ATP = GDP + ADP. Functionally, essential for recycling GMP and indirectly, cGMP. The polypeptide is Guanylate kinase (Nostoc sp. (strain PCC 7120 / SAG 25.82 / UTEX 2576)).